The sequence spans 1205 residues: Plasma membrane calcium-transporting ATPase 1 (1205 aa).

Topologically, residues 2–104 (GDMANNSVAY…KTFLQLVWEA (103 aa)) are cytoplasmic. The calmodulin-binding subdomain A stretch occupies residues 94-111 (PKTFLQLVWEALQDVTLI). Residues 105–125 (LQDVTLIILEIAAVVSLGLSF) form a helical membrane-spanning segment. At 126-153 (YQPPGGNEALCGSVNVGEEEEESEAGWI) the chain is on the extracellular side. A helical transmembrane segment spans residues 154–174 (EGAAILLSVVCVVLVTAFNDW). The Cytoplasmic segment spans residues 175–351 (SKEKQFRGLQ…KEKSVLQGKL (177 aa)). Residues 296 to 343 (EEEKEKEKKDKKTKAQDGAAMEMQPLKSEDGVDGDEKDKKRSNLPKKE) form a disordered region. 2 stretches are compositionally biased toward basic and acidic residues: residues 300–310 (EKEKKDKKTKA) and 322–343 (KSEDGVDGDEKDKKRSNLPKKE). Residues 352–371 (TKLAVQIGKAGLLMSAITVI) traverse the membrane as a helical segment. The Extracellular portion of the chain corresponds to 372–403 (ILVLYFVIDTSWVQKRPWLAECTPIYIQYFVK). The chain crosses the membrane as a helical span at residues 404–424 (FFIIGVTVLVVAVPEGLPLAV). The Cytoplasmic segment spans residues 425–840 (TISLAYSVKK…RNVYDSISKF (416 aa)). Asp-460 serves as the catalytic 4-aspartylphosphate intermediate. Residues Asp-460, Thr-462, and Asp-782 each coordinate Mg(2+). The helical transmembrane segment at 841-861 (LQFQLTVNVVAVIVAFTGACI) threads the bilayer. Residues 862 to 868 (TQDSPLK) are Extracellular-facing. A helical transmembrane segment spans residues 869-889 (AVQMLWVNLIMDTLASLALAT). At 890-912 (EPPTEALLLRKPYGRNKPLISRT) the chain is on the cytoplasmic side. The chain crosses the membrane as a helical span at residues 913 to 933 (MMKNILGHAFYQLVVVFTLLF). Residues 934–956 (AGEKIFDIDSGRNAPLHAPPSEH) lie on the Extracellular side of the membrane. Residues 957 to 976 (YTIVFNTFVMMQLFNEINAR) traverse the membrane as a helical segment. At 977–990 (KIHGERNVFEGIFN) the chain is on the cytoplasmic side. The chain crosses the membrane as a helical span at residues 991–1012 (NAIFCTIVLGTFVVQIIIVQFG). At 1013–1024 (GKPFSCSKLSIE) the chain is on the extracellular side. Residues 1025-1045 (QWLWSVFLGMGTLLWGQLIST) traverse the membrane as a helical segment. The Cytoplasmic portion of the chain corresponds to 1046 to 1205 (IPTSRLKFLK…SPLHSLETSL (160 aa)). At Thr-1101 the chain carries Phosphothreonine; by PKC. Residues 1145-1205 (PLIDDTDAED…SPLHSLETSL (61 aa)) are disordered. Positions 1183-1205 (TDMNKSATSSSPGSPLHSLETSL) are enriched in polar residues.

The protein belongs to the cation transport ATPase (P-type) (TC 3.A.3) family. Type IIB subfamily.

It is found in the cell membrane. The enzyme catalyses Ca(2+)(in) + ATP + H2O = Ca(2+)(out) + ADP + phosphate + H(+). In terms of biological role, catalyzes the hydrolysis of ATP coupled with the transport of calcium from the cytoplasm to the extracellular space thereby maintaining intracellular calcium homeostasis. The sequence is that of Plasma membrane calcium-transporting ATPase 1 from Gallus gallus (Chicken).